Reading from the N-terminus, the 437-residue chain is UDP-N-acetylmuramate--L-alanine ligase (437 aa).

114 to 120 (GTHGKTS) lines the ATP pocket.

The protein belongs to the MurCDEF family.

It is found in the cytoplasm. It carries out the reaction UDP-N-acetyl-alpha-D-muramate + L-alanine + ATP = UDP-N-acetyl-alpha-D-muramoyl-L-alanine + ADP + phosphate + H(+). It functions in the pathway cell wall biogenesis; peptidoglycan biosynthesis. Its function is as follows. Cell wall formation. In Lactobacillus gasseri (strain ATCC 33323 / DSM 20243 / BCRC 14619 / CIP 102991 / JCM 1131 / KCTC 3163 / NCIMB 11718 / NCTC 13722 / AM63), this protein is UDP-N-acetylmuramate--L-alanine ligase.